A 337-amino-acid polypeptide reads, in one-letter code: Receptor like protein kinase S.3 (337 aa).

Residues 50–316 enclose the Protein kinase domain; that stretch reads FKESELFGTE…VNYLEGNDVL (267 aa). Residues 56-64 and K78 contribute to the ATP site; that span reads FGTEANGTV. Y123 carries the post-translational modification Phosphotyrosine. D171 serves as the catalytic Proton acceptor.

This sequence belongs to the protein kinase superfamily. Ser/Thr protein kinase family.

The catalysed reaction is L-seryl-[protein] + ATP = O-phospho-L-seryl-[protein] + ADP + H(+). It catalyses the reaction L-threonyl-[protein] + ATP = O-phospho-L-threonyl-[protein] + ADP + H(+). This chain is Receptor like protein kinase S.3 (LECRKS3), found in Arabidopsis thaliana (Mouse-ear cress).